A 182-amino-acid polypeptide reads, in one-letter code: Epoxyqueuosine reductase QueH (182 aa).

Residues cysteine 10, cysteine 11, cysteine 85, and cysteine 88 each coordinate [4Fe-4S] cluster. A disulfide bridge links cysteine 165 with cysteine 167.

This sequence belongs to the QueH family.

It catalyses the reaction epoxyqueuosine(34) in tRNA + AH2 = queuosine(34) in tRNA + A + H2O. It participates in tRNA modification; tRNA-queuosine biosynthesis. Catalyzes the conversion of epoxyqueuosine (oQ) to queuosine (Q), which is a hypermodified base found in the wobble positions of tRNA(Asp), tRNA(Asn), tRNA(His) and tRNA(Tyr). The protein is Epoxyqueuosine reductase QueH of Dehalococcoides mccartyi (strain ATCC BAA-2266 / KCTC 15142 / 195) (Dehalococcoides ethenogenes (strain 195)).